Here is a 162-residue protein sequence, read N- to C-terminus: Shikimate kinase (162 aa).

10–15 provides a ligand contact to ATP; sequence GAGKST. Serine 14 provides a ligand contact to Mg(2+). The substrate site is built by aspartate 28, arginine 52, and glycine 73. Arginine 113 provides a ligand contact to ATP. Position 129 (arginine 129) interacts with substrate.

The protein belongs to the shikimate kinase family. Monomer. Mg(2+) is required as a cofactor.

It is found in the cytoplasm. It carries out the reaction shikimate + ATP = 3-phosphoshikimate + ADP + H(+). It functions in the pathway metabolic intermediate biosynthesis; chorismate biosynthesis; chorismate from D-erythrose 4-phosphate and phosphoenolpyruvate: step 5/7. In terms of biological role, catalyzes the specific phosphorylation of the 3-hydroxyl group of shikimic acid using ATP as a cosubstrate. The protein is Shikimate kinase of Lactococcus lactis subsp. cremoris (strain MG1363).